Consider the following 94-residue polypeptide: Transcription factor PRE6 (94 aa).

The disordered stretch occupies residues 1–20; the sequence is MSSRRSSRSRQSGSSRISDD. The 55-residue stretch at 6–60 folds into the bHLH domain; it reads SSRSRQSGSSRISDDQISDLVSKLQHLIPELRRRRSDKVSASKVLQETCNYIRNL.

Belongs to the bHLH protein family. Interacts with HFR1.

The protein resides in the cytoplasm. Its subcellular location is the nucleus. Atypical and probable non DNA-binding bHLH transcription factor that regulates light-mediated responses in day light conditions by binding and inhibiting the activity of the bHLH transcription factor HFR1, a critical regulator of light signaling and shade avoidance. Forms non-functional heterodimers with HFR1, causing liberation and activation of PIF4 from the transcriptionally inactive HFR1-PIF4 complex. This is Transcription factor PRE6 (PRE6) from Arabidopsis thaliana (Mouse-ear cress).